The primary structure comprises 142 residues: Large ribosomal subunit protein uL23 (142 aa).

Belongs to the universal ribosomal protein uL23 family.

The polypeptide is Large ribosomal subunit protein uL23 (RPL25) (Kluyveromyces lactis (strain ATCC 8585 / CBS 2359 / DSM 70799 / NBRC 1267 / NRRL Y-1140 / WM37) (Yeast)).